The primary structure comprises 876 residues: DNA mismatch repair protein MutS (876 aa).

Position 628-635 (628-635 (GPNMAGKS)) interacts with ATP.

The protein belongs to the DNA mismatch repair MutS family.

Its function is as follows. This protein is involved in the repair of mismatches in DNA. It is possible that it carries out the mismatch recognition step. This protein has a weak ATPase activity. The polypeptide is DNA mismatch repair protein MutS (Chlorobaculum parvum (strain DSM 263 / NCIMB 8327) (Chlorobium vibrioforme subsp. thiosulfatophilum)).